Reading from the N-terminus, the 281-residue chain is 1-acyl-sn-glycerol-3-phosphate acyltransferase (281 aa).

The next 3 helical transmembrane spans lie at 40 to 60 (IFVC…IMVL), 71 to 91 (LGNL…GIPI), and 110 to 130 (ASPI…VGVA). An HXXXXD motif motif is present at residues 109–114 (HASPID).

The protein belongs to the 1-acyl-sn-glycerol-3-phosphate acyltransferase family.

The protein localises to the membrane. It catalyses the reaction a 1-acyl-sn-glycero-3-phosphate + an acyl-CoA = a 1,2-diacyl-sn-glycero-3-phosphate + CoA. It functions in the pathway phospholipid metabolism; CDP-diacylglycerol biosynthesis; CDP-diacylglycerol from sn-glycerol 3-phosphate: step 2/3. In terms of biological role, converts lysophosphatidic acid (LPA) into phosphatidic acid by incorporating acyl moiety at the 2 position. This enzyme uses erucoyl-CoA as an acyl donor. The protein is 1-acyl-sn-glycerol-3-phosphate acyltransferase of Limnanthes alba (White meadowfoam).